A 371-amino-acid chain; its full sequence is Poly(rC)-binding protein 3 (371 aa).

KH domains are found at residues 45–95 (TLTI…TITG), 129–182 (PVTL…TISG), and 293–357 (ASTH…QYLI).

In terms of tissue distribution, widely expressed, with highest levels in testis and fat tissues and lowest in heart.

It localises to the cytoplasm. Functionally, single-stranded nucleic acid binding protein that binds preferentially to oligo dC. This chain is Poly(rC)-binding protein 3 (Pcbp3), found in Mus musculus (Mouse).